The following is a 930-amino-acid chain: Semaphorin-6C (930 aa).

The N-terminal stretch at 1–24 is a signal peptide; that stretch reads MPRAPHFMPLLLLLLLLSLPHTQA. Over 25 to 604 the chain is Extracellular; it reads AFPQDPLPLL…ASASRSVPIP (580 aa). The Sema domain occupies 30 to 516; the sequence is PLPLLISDLQ…FSGCIVYLPL (487 aa). The N-linked (GlcNAc...) asparagine glycan is linked to N70. 4 disulfides stabilise this stretch: C111-C121, C139-C148, C262-C373, and C287-C332. A glycan (N-linked (GlcNAc...) asparagine) is linked at N286. N-linked (GlcNAc...) asparagine glycosylation occurs at N437. Cystine bridges form between C479-C510, C519-C537, C525-C570, and C529-C545. The interval 554-593 is disordered; the sequence is TDVDQAGNQESMEHGDCQDGATGSQSGPGDSAYGVRRDLP. Residues 605 to 625 traverse the membrane as a helical segment; sequence LLLASVAAAFALGASVSGLLV. Topologically, residues 626 to 930 are cytoplasmic; that stretch reads SCACRRAHRR…AVPNGGRFNF (305 aa). 4 disordered regions span residues 654–674, 716–761, 775–882, and 908–930; these read LARL…GDAV, GDPW…PGQA, HGPQ…PGKH, and SLKP…RFNF. Low complexity predominate over residues 829–844; it reads ASAPARPALSAPAPRL.

This sequence belongs to the semaphorin family. In adult tissues, expressed only in skeletal muscle.

It localises to the cell membrane. Functionally, shows growth cone collapsing activity on dorsal root ganglion (DRG) neurons in vitro. May be a stop signal for the DRG neurons in their target areas, and possibly also for other neurons. May also be involved in the maintenance and remodeling of neuronal connections. The polypeptide is Semaphorin-6C (SEMA6C) (Homo sapiens (Human)).